A 104-amino-acid polypeptide reads, in one-letter code: MRIKNKIKKRIIELIDLAYITARKGDLELAREYIKLAEMYSRKGRVKIPLKYKRMFCRKCYTPLITGVTERRRIRSKILIRTCLICNWQRRYVLSRNKGSNKEN.

Cysteine 57, cysteine 60, cysteine 83, and cysteine 86 together coordinate Zn(2+).

Belongs to the eukaryotic/archaeal RNase P protein component 4 family. As to quaternary structure, consists of a catalytic RNA component and at least 4-5 protein subunits. Zn(2+) serves as cofactor.

It localises to the cytoplasm. The catalysed reaction is Endonucleolytic cleavage of RNA, removing 5'-extranucleotides from tRNA precursor.. In terms of biological role, part of ribonuclease P, a protein complex that generates mature tRNA molecules by cleaving their 5'-ends. This Saccharolobus islandicus (strain M.16.27) (Sulfolobus islandicus) protein is Ribonuclease P protein component 4.